An 887-amino-acid polypeptide reads, in one-letter code: Microsomal triglyceride transfer protein large subunit (887 aa).

The signal sequence occupies residues 1 to 11; the sequence is FLCFISSYSAS. One can recognise a Vitellogenin domain in the interval 21–655; it reads LNNDRLYKLT…YIEKTPLHGI (635 aa). A disulfide bridge links C167 with C187.

As to quaternary structure, heterodimer; heterodimerizes with the protein disulfide isomerase (P4HB/PDI). Interacts with APOB. Interacts with PRAP1.

It is found in the endoplasmic reticulum. It localises to the golgi apparatus. It carries out the reaction a 1,2-diacyl-sn-glycero-3-phosphocholine(in) = a 1,2-diacyl-sn-glycero-3-phosphocholine(out). The enzyme catalyses a 1,2-diacyl-sn-glycero-3-phosphoethanolamine(in) = a 1,2-diacyl-sn-glycero-3-phosphoethanolamine(out). The catalysed reaction is a cholesterol ester(in) = a cholesterol ester(out). It catalyses the reaction a triacyl-sn-glycerol(in) = a triacyl-sn-glycerol(out). Catalyzes the transport of triglyceride, cholesteryl ester, and phospholipid between phospholipid surfaces. Required for the assembly and secretion of plasma lipoproteins that contain apolipoprotein B. May be involved in regulating cholesteryl ester biosynthesis in cells that produce lipoproteins. The chain is Microsomal triglyceride transfer protein large subunit (MTTP) from Bos taurus (Bovine).